A 262-amino-acid polypeptide reads, in one-letter code: Acyl-[acyl-carrier-protein]--UDP-N-acetylglucosamine O-acyltransferase (262 aa).

This sequence belongs to the transferase hexapeptide repeat family. LpxA subfamily. Homotrimer.

The protein localises to the cytoplasm. The enzyme catalyses a (3R)-hydroxyacyl-[ACP] + UDP-N-acetyl-alpha-D-glucosamine = a UDP-3-O-[(3R)-3-hydroxyacyl]-N-acetyl-alpha-D-glucosamine + holo-[ACP]. It functions in the pathway glycolipid biosynthesis; lipid IV(A) biosynthesis; lipid IV(A) from (3R)-3-hydroxytetradecanoyl-[acyl-carrier-protein] and UDP-N-acetyl-alpha-D-glucosamine: step 1/6. Involved in the biosynthesis of lipid A, a phosphorylated glycolipid that anchors the lipopolysaccharide to the outer membrane of the cell. In Vibrio cholerae serotype O1 (strain ATCC 39541 / Classical Ogawa 395 / O395), this protein is Acyl-[acyl-carrier-protein]--UDP-N-acetylglucosamine O-acyltransferase.